A 359-amino-acid polypeptide reads, in one-letter code: Alanine racemase, biosynthetic (359 aa).

Lysine 34 serves as the catalytic Proton acceptor; specific for D-alanine. An N6-(pyridoxal phosphate)lysine modification is found at lysine 34. Arginine 129 contacts substrate. The active-site Proton acceptor; specific for L-alanine is tyrosine 255. Methionine 303 provides a ligand contact to substrate.

Belongs to the alanine racemase family. Monomer but homodimer in the presence of the substrate. Pyridoxal 5'-phosphate serves as cofactor.

It carries out the reaction L-alanine = D-alanine. Its pathway is amino-acid biosynthesis; D-alanine biosynthesis; D-alanine from L-alanine: step 1/1. The protein operates within cell wall biogenesis; peptidoglycan biosynthesis. Functionally, catalyzes the interconversion of L-alanine and D-alanine. The sequence is that of Alanine racemase, biosynthetic (alr) from Shigella sonnei.